The following is a 315-amino-acid chain: Protein FRA10AC1 (315 aa).

Methionine 1 is modified (N-acetylmethionine). A disordered region spans residues 1-28; the sequence is MHGHGGYDSDFSDDERCGESSKRKKRTV. Residues serine 9 and serine 12 each carry the phosphoserine modification. Lysine 36 bears the N6-acetyllysine mark. Residues 226-235 are compositionally biased toward basic residues; the sequence is EIKSKKRKDK. The segment at 226 to 315 is disordered; that stretch reads EIKSKKRKDK…FDEYFQDLFL (90 aa). A compositionally biased stretch (basic and acidic residues) spans 236–245; the sequence is TKKDCEESSH. Phosphoserine is present on residues serine 251, serine 252, serine 278, serine 283, and serine 285. Over residues 268 to 278 the composition is skewed to basic and acidic residues; that stretch reads KKSEDSLLRNS. Residues 301–315 are compositionally biased toward acidic residues; the sequence is SQEEEFDEYFQDLFL.

As to quaternary structure, interacts with ESS2. In terms of tissue distribution, ubiquitously expressed with higher expression in brain, heart, skeletal muscle, kidney and liver.

It localises to the nucleus. In terms of biological role, may be involved in pre-mRNA splicing. This chain is Protein FRA10AC1 (FRA10AC1), found in Homo sapiens (Human).